Consider the following 313-residue polypeptide: Malate dehydrogenase (313 aa).

Residues 11–16 (GAGNIG) and D35 each bind NAD(+). R86 and R92 together coordinate substrate. NAD(+) contacts are provided by residues N99 and 122–124 (ISN). 2 residues coordinate substrate: N124 and R155. The active-site Proton acceptor is the H179.

Belongs to the LDH/MDH superfamily. MDH type 3 family.

It catalyses the reaction (S)-malate + NAD(+) = oxaloacetate + NADH + H(+). Catalyzes the reversible oxidation of malate to oxaloacetate. This chain is Malate dehydrogenase, found in Sorangium cellulosum (strain So ce56) (Polyangium cellulosum (strain So ce56)).